The following is a 214-amino-acid chain: MKHTSEPTSQPDTQAAESAQSSAAAAGQAASAYSSQAQRASADAQAIAGDEAAVAEATIEPDTAELRRQLEAADEKARQNYENWARAVAEGENIRRRAQDDVARAHKFAIEGFAEYLLPVMDSLQAALADASGDVAKLREGVELTLKQLNAAFEKGRVTELNPVGEKFDPHRHQAISMVPADQEANTVVNVLQRGYTLADRVLRPALVTVAAPK.

Positions 1-13 (MKHTSEPTSQPDT) are enriched in polar residues. Positions 1–61 (MKHTSEPTSQ…AAVAEATIEP (61 aa)) are disordered. The segment covering 14–57 (QAAESAQSSAAAAGQAASAYSSQAQRASADAQAIAGDEAAVAEA) has biased composition (low complexity).

It belongs to the GrpE family. In terms of assembly, homodimer.

The protein localises to the cytoplasm. Participates actively in the response to hyperosmotic and heat shock by preventing the aggregation of stress-denatured proteins, in association with DnaK and GrpE. It is the nucleotide exchange factor for DnaK and may function as a thermosensor. Unfolded proteins bind initially to DnaJ; upon interaction with the DnaJ-bound protein, DnaK hydrolyzes its bound ATP, resulting in the formation of a stable complex. GrpE releases ADP from DnaK; ATP binding to DnaK triggers the release of the substrate protein, thus completing the reaction cycle. Several rounds of ATP-dependent interactions between DnaJ, DnaK and GrpE are required for fully efficient folding. The chain is Protein GrpE from Ralstonia nicotianae (strain ATCC BAA-1114 / GMI1000) (Ralstonia solanacearum).